A 721-amino-acid chain; its full sequence is S-adenosyl-L-methionine-dependent tRNA 4-demethylwyosine synthase TYW1 (721 aa).

Residues 71 to 229 (VKIFYGSQTG…DFTAWKTKFI (159 aa)) form the Flavodoxin-like domain. FMN contacts are provided by residues 77–81 (SQTGT) and 168–200 (VFGLGDSAYRSHFNKVSTNVDKWLWMLGAQRVL). Disordered stretches follow at residues 242-291 (ACGG…ELGT) and 305-339 (DLGNIMNPVKREKREKSHQDGKAAMQRNPEKTEDG). Over residues 250 to 274 (GKCESAQHGPGEARPHPQGELHPGD) the composition is skewed to basic and acidic residues. Residues 275-290 (AEEEEPCESSSEDELG) are compositionally biased toward acidic residues. The segment covering 313 to 325 (VKREKREKSHQDG) has biased composition (basic and acidic residues). One can recognise a Radical SAM core domain in the interval 389-635 (YGIESHRCME…LLPDYEVACE (247 aa)). [4Fe-4S] cluster-binding residues include cysteine 405, cysteine 409, and cysteine 412.

The protein belongs to the TYW1 family. [4Fe-4S] cluster is required as a cofactor.

It catalyses the reaction N(1)-methylguanosine(37) in tRNA(Phe) + pyruvate + S-adenosyl-L-methionine = 4-demethylwyosine(37) in tRNA(Phe) + 5'-deoxyadenosine + L-methionine + CO2 + H2O. It functions in the pathway tRNA modification; wybutosine-tRNA(Phe) biosynthesis. In terms of biological role, probable component of the wybutosine biosynthesis pathway. Wybutosine is a hyper modified guanosine with a tricyclic base found at the 3'-position adjacent to the anticodon of eukaryotic phenylalanine tRNA. Catalyzes the condensation of N-methylguanine with 2 carbon atoms from pyruvate to form the tricyclic 4-demethylwyosine, an intermediate in wybutosine biosynthesis. This is S-adenosyl-L-methionine-dependent tRNA 4-demethylwyosine synthase TYW1 (Tyw1) from Mus musculus (Mouse).